Consider the following 407-residue polypeptide: uncharacterized protein (407 aa).

The next 12 helical transmembrane spans lie at 22 to 42 (IVSV…PLAV), 51 to 71 (LGFS…ATLA), 101 to 121 (ALLL…GLLV), 126 to 146 (VLGI…IGRV), 154 to 174 (VISW…PVGV), 179 to 199 (ALIP…GYYL), 227 to 247 (GLGL…ITLY), 258 to 278 (LSLT…ANTI), 286 to 306 (VAIV…LAPV), 309 to 329 (VALV…PALG), 347 to 367 (AYSV…GYVA), and 369 to 389 (AFGY…GVAL).

Belongs to the major facilitator superfamily. YhhS family.

Its subcellular location is the cell inner membrane. This is an uncharacterized protein from Burkholderia mallei (strain NCTC 10229).